An 82-amino-acid polypeptide reads, in one-letter code: ATP synthase subunit c (82 aa).

Transmembrane regions (helical) follow at residues 7-27 (FVALAAGLIIGLGAVGACIGI) and 53-73 (FLLAGLIDAAFLIGVGIAMMF).

Belongs to the ATPase C chain family. In terms of assembly, F-type ATPases have 2 components, F(1) - the catalytic core - and F(0) - the membrane proton channel. F(1) has five subunits: alpha(3), beta(3), gamma(1), delta(1), epsilon(1). F(0) has three main subunits: a(1), b(2) and c(10-14). The alpha and beta chains form an alternating ring which encloses part of the gamma chain. F(1) is attached to F(0) by a central stalk formed by the gamma and epsilon chains, while a peripheral stalk is formed by the delta and b chains.

Its subcellular location is the cell inner membrane. Its function is as follows. F(1)F(0) ATP synthase produces ATP from ADP in the presence of a proton or sodium gradient. F-type ATPases consist of two structural domains, F(1) containing the extramembraneous catalytic core and F(0) containing the membrane proton channel, linked together by a central stalk and a peripheral stalk. During catalysis, ATP synthesis in the catalytic domain of F(1) is coupled via a rotary mechanism of the central stalk subunits to proton translocation. Functionally, key component of the F(0) channel; it plays a direct role in translocation across the membrane. A homomeric c-ring of between 10-14 subunits forms the central stalk rotor element with the F(1) delta and epsilon subunits. The sequence is that of ATP synthase subunit c from Polaromonas sp. (strain JS666 / ATCC BAA-500).